A 209-amino-acid chain; its full sequence is Protein GrpE (209 aa).

Positions 1–13 are enriched in polar residues; the sequence is MSNDSSKAKQNQV. The tract at residues 1–33 is disordered; that stretch reads MSNDSSKAKQNQVDEAVEGEILTESEVETGNDE. A compositionally biased stretch (acidic residues) spans 15–31; it reads EAVEGEILTESEVETGN.

This sequence belongs to the GrpE family. In terms of assembly, homodimer.

It localises to the cytoplasm. Participates actively in the response to hyperosmotic and heat shock by preventing the aggregation of stress-denatured proteins, in association with DnaK and GrpE. It is the nucleotide exchange factor for DnaK and may function as a thermosensor. Unfolded proteins bind initially to DnaJ; upon interaction with the DnaJ-bound protein, DnaK hydrolyzes its bound ATP, resulting in the formation of a stable complex. GrpE releases ADP from DnaK; ATP binding to DnaK triggers the release of the substrate protein, thus completing the reaction cycle. Several rounds of ATP-dependent interactions between DnaJ, DnaK and GrpE are required for fully efficient folding. This chain is Protein GrpE, found in Shewanella woodyi (strain ATCC 51908 / MS32).